Here is a 506-residue protein sequence, read N- to C-terminus: Cytochrome P450 monooxygenase TES1 (506 aa).

Residues 26–46 (MSVVLAGLILLASIYFPRFMF) traverse the membrane as a helical segment. N-linked (GlcNAc...) asparagine glycosylation is found at Asn-167, Asn-201, Asn-298, and Asn-427. Position 440 (Cys-440) interacts with heme.

Belongs to the cytochrome P450 family. It depends on heme as a cofactor.

The protein localises to the membrane. Its pathway is phytotoxin biosynthesis. In terms of biological role, cytochrome P450 monooxygenase; part of the gene cluster that mediates the biosynthesis of the phytotoxin tentoxin, an inhibitor the F1-ATPase activity of chloroplasts, resulting in chlorosis in sensitive plants. Tentoxin is a cyclic tetrapeptide that consists of four amino acid residues: glycine (Gly), alanine (Ala), leucine (Leu), and dehydrophenylalanine (DPhe). In addition, both the Ala and DPhe residues are N-methylated. The nonribosomal peptide synthetase TES assembles tentoxin from the four substrate amino acids. The adenylation domains of each of the 4 modules are responsible for the activation of Gly, Ala, Leu and DPhe, respectively. In addition, the N-methyltransferase domains in the second and fourth modules of TES could be responsible for N-methylation of Ala and DPhe residues. Finally, the condensation domain located in the termination module probably catalyzes the formation of the intramolecular macrocyclization and then the release of tentoxin. The cytochrome P450 monooxygenase TES1 is predicted to be involved in the formation of DPhe. This Alternaria alternata (Alternaria rot fungus) protein is Cytochrome P450 monooxygenase TES1.